Here is a 497-residue protein sequence, read N- to C-terminus: Glycerol kinase (497 aa).

Thr-12 is a binding site for ADP. 3 residues coordinate ATP: Thr-12, Thr-13, and Ser-14. A sn-glycerol 3-phosphate-binding site is contributed by Thr-12. Arg-16 lines the ADP pocket. Positions 82, 83, 134, and 243 each coordinate sn-glycerol 3-phosphate. The glycerol site is built by Arg-82, Glu-83, Tyr-134, Asp-243, and Gln-244. Residues Thr-265 and Gly-308 each contribute to the ADP site. The ATP site is built by Thr-265, Gly-308, Gln-312, and Gly-409. Residues Gly-409 and Asn-413 each coordinate ADP.

Belongs to the FGGY kinase family.

The catalysed reaction is glycerol + ATP = sn-glycerol 3-phosphate + ADP + H(+). The protein operates within polyol metabolism; glycerol degradation via glycerol kinase pathway; sn-glycerol 3-phosphate from glycerol: step 1/1. Its activity is regulated as follows. Inhibited by fructose 1,6-bisphosphate (FBP). Key enzyme in the regulation of glycerol uptake and metabolism. Catalyzes the phosphorylation of glycerol to yield sn-glycerol 3-phosphate. The polypeptide is Glycerol kinase (Oleidesulfovibrio alaskensis (strain ATCC BAA-1058 / DSM 17464 / G20) (Desulfovibrio alaskensis)).